We begin with the raw amino-acid sequence, 436 residues long: GTPase Der (436 aa).

2 consecutive EngA-type G domains span residues 4 to 167 and 175 to 351; these read PTVA…PVEE and IRFS…ESQN. GTP-binding positions include 10 to 17, 57 to 61, 119 to 122, 181 to 188, 229 to 233, and 294 to 297; these read GRPNVGKS, DTGGI, NKVD, DTAGM, and NKWD. One can recognise a KH-like domain in the interval 352–436; sequence KRIPSAVLND…PIHLIARKRK (85 aa).

Belongs to the TRAFAC class TrmE-Era-EngA-EngB-Septin-like GTPase superfamily. EngA (Der) GTPase family. In terms of assembly, associates with the 50S ribosomal subunit.

GTPase that plays an essential role in the late steps of ribosome biogenesis. This chain is GTPase Der, found in Streptococcus pyogenes serotype M2 (strain MGAS10270).